A 261-amino-acid polypeptide reads, in one-letter code: Hydroxyethylthiazole kinase (261 aa).

Substrate is bound at residue methionine 38. ATP contacts are provided by arginine 114 and threonine 159. Glycine 186 is a binding site for substrate.

Belongs to the Thz kinase family. Mg(2+) is required as a cofactor.

It catalyses the reaction 5-(2-hydroxyethyl)-4-methylthiazole + ATP = 4-methyl-5-(2-phosphooxyethyl)-thiazole + ADP + H(+). Its pathway is cofactor biosynthesis; thiamine diphosphate biosynthesis; 4-methyl-5-(2-phosphoethyl)-thiazole from 5-(2-hydroxyethyl)-4-methylthiazole: step 1/1. Its function is as follows. Catalyzes the phosphorylation of the hydroxyl group of 4-methyl-5-beta-hydroxyethylthiazole (THZ). This is Hydroxyethylthiazole kinase from Halalkalibacterium halodurans (strain ATCC BAA-125 / DSM 18197 / FERM 7344 / JCM 9153 / C-125) (Bacillus halodurans).